The primary structure comprises 261 residues: Small ribosomal subunit protein uS2 (261 aa).

Belongs to the universal ribosomal protein uS2 family.

This chain is Small ribosomal subunit protein uS2, found in Enterococcus faecalis (strain ATCC 700802 / V583).